Consider the following 1417-residue polypeptide: DNA-directed RNA polymerase subunit beta' (1417 aa).

4 residues coordinate Zn(2+): Cys68, Cys70, Cys83, and Cys86. Mg(2+)-binding residues include Asp458, Asp460, and Asp462. Zn(2+)-binding residues include Cys811, Cys884, Cys891, and Cys894.

It belongs to the RNA polymerase beta' chain family. As to quaternary structure, the RNAP catalytic core consists of 2 alpha, 1 beta, 1 beta' and 1 omega subunit. When a sigma factor is associated with the core the holoenzyme is formed, which can initiate transcription. Requires Mg(2+) as cofactor. The cofactor is Zn(2+).

The catalysed reaction is RNA(n) + a ribonucleoside 5'-triphosphate = RNA(n+1) + diphosphate. DNA-dependent RNA polymerase catalyzes the transcription of DNA into RNA using the four ribonucleoside triphosphates as substrates. This chain is DNA-directed RNA polymerase subunit beta', found in Francisella tularensis subsp. tularensis (strain FSC 198).